A 393-amino-acid polypeptide reads, in one-letter code: Putative B3 domain-containing protein Os06g0632500 (393 aa).

3 consecutive DNA-binding regions (TF-B3) follow at residues 27–123 (LSVP…FDPG), 141–238 (RPRF…FLQN), and 316–393 (NSFT…VQRR).

The protein localises to the nucleus. This Oryza sativa subsp. japonica (Rice) protein is Putative B3 domain-containing protein Os06g0632500.